Consider the following 69-residue polypeptide: Large ribosomal subunit protein uL29 (69 aa).

Belongs to the universal ribosomal protein uL29 family.

This is Large ribosomal subunit protein uL29 from Natronomonas pharaonis (strain ATCC 35678 / DSM 2160 / CIP 103997 / JCM 8858 / NBRC 14720 / NCIMB 2260 / Gabara) (Halobacterium pharaonis).